A 585-amino-acid polypeptide reads, in one-letter code: Sodium/calcium exchanger NCL (585 aa).

The next 5 helical transmembrane spans lie at 83–103 (VFLILVYGFLMFTAATYLSAG), 106–126 (LLLEILGPGIVGGLFLPMLGA), 149–169 (VSVGMGLLAGSTVMLLTVIWG), 212–232 (IMAISVIPFVIVQLPQMLGST), and 239–259 (VLIALILSVLMLISYCVYQVF). 2 EF-hand domains span residues 299 to 334 (PDEHVIRKLFLTIDANNDGHLSAAELKALIIGISFE) and 339 to 374 (DKDDAVGKVLQDFDKTLDEQVDQEEFVRGIKQWLIQ). Residues Asp-312, Asn-314, Asp-316, His-318, Glu-323, Asp-352, Asp-356, Gln-358, and Glu-363 each contribute to the Ca(2+) site. Transmembrane regions (helical) follow at residues 427–447 (WITIKAALLLLLGAAIAAAFA) and 457–477 (FSAATGIPSFFISFIALPLAT). Asn-478 carries N-linked (GlcNAc...) asparagine glycosylation. 3 helical membrane-spanning segments follow: residues 505–525 (CGGVTMNNILCLSVFLAIVYV), 532–552 (FSSEVLVILIVCLVMGGFASF), and 558–578 (LWTCFIAYLLYPFSLGLVYIL).

It belongs to the Ca(2+):cation antiporter (CaCA) (TC 2.A.19) family. Expressed in roots, leaves, stems, petals, stamens, ovules and siliques.

It is found in the cell membrane. The protein localises to the vacuole membrane. Functionally, possesses sodium/calcium exchanger (NCX) activity when expressed in a heterologous mammalian CHO-K1 cell system. Does not possess cation/proton exchanger (CAX) or sodium/proton (NHX) activity when expressed in a heterologous yeast cell system. Has the ability to bind calcium in vitro. Participates in the maintenance of calcium homeostasis. May play a role in auxin response, diurnal rhythm and flowering time. Involved in salt stress response. The protein is Sodium/calcium exchanger NCL of Arabidopsis thaliana (Mouse-ear cress).